We begin with the raw amino-acid sequence, 434 residues long: Glutamate-1-semialdehyde 2,1-aminomutase 2 (434 aa).

The residue at position 270 (lysine 270) is an N6-(pyridoxal phosphate)lysine.

It belongs to the class-III pyridoxal-phosphate-dependent aminotransferase family. HemL subfamily. As to quaternary structure, homodimer. Pyridoxal 5'-phosphate is required as a cofactor.

It is found in the cytoplasm. The enzyme catalyses (S)-4-amino-5-oxopentanoate = 5-aminolevulinate. It functions in the pathway porphyrin-containing compound metabolism; protoporphyrin-IX biosynthesis; 5-aminolevulinate from L-glutamyl-tRNA(Glu): step 2/2. The protein is Glutamate-1-semialdehyde 2,1-aminomutase 2 of Bacillus cereus (strain G9842).